We begin with the raw amino-acid sequence, 609 residues long: UvrABC system protein C (609 aa).

The GIY-YIG domain occupies 13–91 (HEPGVYRMYD…IKLYQPRYNV (79 aa)). The UVR domain maps to 201–236 (QQVLDYLIGKMEQASRNLDFEQAARYRDQIQAVRSV).

It belongs to the UvrC family. In terms of assembly, interacts with UvrB in an incision complex.

It localises to the cytoplasm. Its function is as follows. The UvrABC repair system catalyzes the recognition and processing of DNA lesions. UvrC both incises the 5' and 3' sides of the lesion. The N-terminal half is responsible for the 3' incision and the C-terminal half is responsible for the 5' incision. The chain is UvrABC system protein C from Haemophilus influenzae (strain ATCC 51907 / DSM 11121 / KW20 / Rd).